A 283-amino-acid polypeptide reads, in one-letter code: tRNA-cytidine(32) 2-sulfurtransferase (283 aa).

Positions 49–54 match the PP-loop motif motif; sequence SGGKDS. Residues cysteine 124, cysteine 127, and cysteine 215 each contribute to the [4Fe-4S] cluster site.

This sequence belongs to the TtcA family. In terms of assembly, homodimer. Mg(2+) serves as cofactor. It depends on [4Fe-4S] cluster as a cofactor.

The protein resides in the cytoplasm. The enzyme catalyses cytidine(32) in tRNA + S-sulfanyl-L-cysteinyl-[cysteine desulfurase] + AH2 + ATP = 2-thiocytidine(32) in tRNA + L-cysteinyl-[cysteine desulfurase] + A + AMP + diphosphate + H(+). It functions in the pathway tRNA modification. In terms of biological role, catalyzes the ATP-dependent 2-thiolation of cytidine in position 32 of tRNA, to form 2-thiocytidine (s(2)C32). The sulfur atoms are provided by the cysteine/cysteine desulfurase (IscS) system. The protein is tRNA-cytidine(32) 2-sulfurtransferase of Acaryochloris marina (strain MBIC 11017).